The primary structure comprises 83 residues: Alpha-neurotoxin NTX-2 (83 aa).

The signal sequence occupies residues 1–21 (MKTLLLTLLVVTIVCLDLGYT). Cystine bridges form between C24-C45, C38-C62, C64-C75, and C76-C81.

Belongs to the three-finger toxin family. Short-chain subfamily. Type I alpha-neurotoxin sub-subfamily. Expressed by the venom gland.

The protein resides in the secreted. Binds to muscle nicotinic acetylcholine receptor (nAChR) and inhibit acetylcholine from binding to the receptor, thereby impairing neuromuscular transmission. This is Alpha-neurotoxin NTX-2 from Naja sputatrix (Malayan spitting cobra).